Reading from the N-terminus, the 352-residue chain is Photosystem II D2 protein (352 aa).

The chain crosses the membrane as a helical span at residues 40 to 60 (CAFLSIGGWLTGTTFVTSWYT). His-117 contacts chlorophyll a. Residues 124 to 140 (GFCLRQIEIARLVGIRP) traverse the membrane as a helical segment. 2 residues coordinate pheophytin a: Gln-129 and Asn-142. A helical transmembrane segment spans residues 152-165 (VFVSVFLMYPLGQS). His-197 contacts chlorophyll a. A helical membrane pass occupies residues 207–227 (GALLCAIHGATVENTLFQDGE). A plastoquinone contacts are provided by His-214 and Phe-261. His-214 is a Fe cation binding site. His-268 contributes to the Fe cation binding site. The chain crosses the membrane as a helical span at residues 278–294 (GLWMSSIGIVGLAFNLR).

Belongs to the reaction center PufL/M/PsbA/D family. In terms of assembly, PSII is composed of 1 copy each of membrane proteins PsbA, PsbB, PsbC, PsbD, PsbE, PsbF, PsbH, PsbI, PsbJ, PsbK, PsbL, PsbM, PsbT, PsbX, PsbY, PsbZ, Psb30/Ycf12, peripheral proteins PsbO, CyanoQ (PsbQ), PsbU, PsbV and a large number of cofactors. It forms dimeric complexes. The cofactor is The D1/D2 heterodimer binds P680, chlorophylls that are the primary electron donor of PSII, and subsequent electron acceptors. It shares a non-heme iron and each subunit binds pheophytin, quinone, additional chlorophylls, carotenoids and lipids. There is also a Cl(-1) ion associated with D1 and D2, which is required for oxygen evolution. The PSII complex binds additional chlorophylls, carotenoids and specific lipids..

It localises to the cellular thylakoid membrane. It carries out the reaction 2 a plastoquinone + 4 hnu + 2 H2O = 2 a plastoquinol + O2. In terms of biological role, photosystem II (PSII) is a light-driven water:plastoquinone oxidoreductase that uses light energy to abstract electrons from H(2)O, generating O(2) and a proton gradient subsequently used for ATP formation. It consists of a core antenna complex that captures photons, and an electron transfer chain that converts photonic excitation into a charge separation. The D1/D2 (PsbA/PsbD) reaction center heterodimer binds P680, the primary electron donor of PSII as well as several subsequent electron acceptors. D2 is needed for assembly of a stable PSII complex. The protein is Photosystem II D2 protein of Trichodesmium erythraeum (strain IMS101).